The chain runs to 111 residues: Guanylate cyclase activator 2B (111 aa).

Residues 1–26 (MGSRTLLGHLSVLAVVLLLLLQGTQS) form the signal peptide. The propeptide occupies 27 to 96 (VDIKYQGYQV…SILQALRTMD (70 aa)). Cystine bridges form between Cys67–Cys80, Cys100–Cys108, and Cys103–Cys111.

The protein belongs to the guanylin family.

It is found in the secreted. In terms of biological role, endogenous activator of intestinal guanylate cyclase. It stimulates this enzyme through the same receptor binding region as the heat-stable enterotoxins. May be a potent physiological regulator of intestinal fluid and electrolyte transport. May be an autocrine/paracrine regulator of intestinal salt and water transport. The polypeptide is Guanylate cyclase activator 2B (GUCA2B) (Cavia porcellus (Guinea pig)).